A 115-amino-acid polypeptide reads, in one-letter code: Double-headed protease inhibitor, submandibular gland (115 aa).

2 consecutive Kazal-like domains span residues 6-66 (IGRE…ACDI) and 67-115 (ECTE…HGEC). Intrachain disulfides connect cysteine 12/cysteine 46, cysteine 24/cysteine 43, cysteine 32/cysteine 64, cysteine 68/cysteine 97, cysteine 75/cysteine 94, and cysteine 83/cysteine 115.

It localises to the secreted. In terms of biological role, this inhibitor is composed of two homologous actively inhibiting halves: one which inhibits trypsin, the other which inhibits elastase. This Vulpes vulpes (Red fox) protein is Double-headed protease inhibitor, submandibular gland.